The sequence spans 276 residues: UPF0276 protein AM1_3026 (276 aa).

The protein belongs to the UPF0276 family.

This chain is UPF0276 protein AM1_3026, found in Acaryochloris marina (strain MBIC 11017).